A 286-amino-acid chain; its full sequence is D-tagatose-1,6-bisphosphate aldolase subunit KbaY (286 aa).

Residue aspartate 82 is the Proton donor of the active site. Zn(2+) is bound by residues histidine 83 and histidine 180. Glycine 181 contributes to the dihydroxyacetone phosphate binding site. Histidine 208 contacts Zn(2+). Dihydroxyacetone phosphate is bound by residues 209-211 (GAS) and 230-233 (NVAT).

This sequence belongs to the class II fructose-bisphosphate aldolase family. TagBP aldolase KbaY subfamily. In terms of assembly, homotetramer. Forms a complex with KbaZ. Zn(2+) serves as cofactor.

It catalyses the reaction D-tagatofuranose 1,6-bisphosphate = D-glyceraldehyde 3-phosphate + dihydroxyacetone phosphate. Its pathway is carbohydrate metabolism; D-tagatose 6-phosphate degradation; D-glyceraldehyde 3-phosphate and glycerone phosphate from D-tagatose 6-phosphate: step 2/2. Functionally, catalytic subunit of the tagatose-1,6-bisphosphate aldolase KbaYZ, which catalyzes the reversible aldol condensation of dihydroxyacetone phosphate (DHAP or glycerone-phosphate) with glyceraldehyde 3-phosphate (G3P) to produce tagatose 1,6-bisphosphate (TBP). Requires KbaZ subunit for full activity and stability. The chain is D-tagatose-1,6-bisphosphate aldolase subunit KbaY from Escherichia coli O7:K1 (strain IAI39 / ExPEC).